The following is a 1360-amino-acid chain: Spike glycoprotein (1360 aa).

The N-terminal stretch at Met1–Leu13 is a signal peptide. Residues Gly14–Pro1301 lie on the Extracellular side of the membrane. Residues Tyr15–Thr296 enclose the BetaCoV S1-NTD domain. Disulfide bonds link Cys21–Cys158, Cys153–Cys187, Cys165–Cys246, Cys284–Cys294, and Cys329–Cys354. Residues Asn60 and Asn134 are each glycosylated (N-linked (GlcNAc...) asparagine; by host). Asn192 carries an N-linked (GlcNAc...) asparagine; by host glycan. Positions Pro327–Thr605 constitute a BetaCoV S1-CTD domain. An N-linked (GlcNAc...) asparagine; by host glycan is attached at Asn357. 2 cysteine pairs are disulfide-bonded: Cys372/Cys425 and Cys384/Cys603. Residues Asn435, Asn566, Asn664, Asn704, Asn727, Asn747, Asn776, and Asn793 are each glycosylated (N-linked (GlcNAc...) asparagine; by host). Fusion peptide stretches follow at residues Ser906–Tyr927 and Glu925–Phe945. Asn929 carries an N-linked (GlcNAc...) asparagine; by host glycan. Cys930 and Cys941 are joined by a disulfide. Residues Gln1006–Phe1056 form a heptad repeat 1 region. Residues Gln1035 to Ile1079 are a coiled coil. 5 N-linked (GlcNAc...) asparagine; by host glycosylation sites follow: Asn1216, Asn1226, Asn1245, Asn1261, and Asn1282. Positions Val1250–Glu1290 are heptad repeat 2. Residues Thr1263–Ile1291 adopt a coiled-coil conformation. Residues Trp1302 to Ile1322 form a helical membrane-spanning segment. Over Cys1323–Asp1360 the chain is Cytoplasmic. The KxHxx motif lies at Ser1356–Asp1360.

It belongs to the betacoronaviruses spike protein family. In terms of assembly, homotrimer; each monomer consists of a S1 and a S2 subunit. The resulting peplomers protrude from the virus surface as spikes. Post-translationally, specific enzymatic cleavages in vivo yield mature proteins. The precursor is processed into S1 and S2 by host cell furin or another cellular protease to yield the mature S1 and S2 proteins. Additionally, a second cleavage leads to the release of a fusion peptide after viral attachment to host cell receptor. The cytoplasmic Cys-rich domain is palmitoylated. Spike glycoprotein is digested within host endosomes.

The protein resides in the virion membrane. The protein localises to the host endoplasmic reticulum-Golgi intermediate compartment membrane. Its subcellular location is the host cell membrane. Functionally, attaches the virion to the cell membrane by interacting with host receptor, initiating the infection. Mediates fusion of the virion and cellular membranes by acting as a class I viral fusion protein. Under the current model, the protein has at least three conformational states: pre-fusion native state, pre-hairpin intermediate state, and post-fusion hairpin state. During viral and target cell membrane fusion, the coiled coil regions (heptad repeats) assume a trimer-of-hairpins structure, positioning the fusion peptide in close proximity to the C-terminal region of the ectodomain. The formation of this structure appears to drive apposition and subsequent fusion of viral and target cell membranes. Its function is as follows. Acts as a viral fusion peptide which is unmasked following S2 cleavage occurring upon virus endocytosis. This chain is Spike glycoprotein, found in Rat coronavirus (strain 681) (RCV-SDAV).